The sequence spans 520 residues: MAKIGRALISVSEKTGVVEFSRALAGYGVEILSTGGTAKLLREAGIAVKDVSEFTGFPEMLDGRVKTLHPKVHGGILGMRENPAHVAKMQEHGIEPIDMVVVNLYPFEATVAKEDCTMEDAIENIDIGGPTMLRSAAKNNRDVTVVVDHADYAVVLDEMKNSGGSVSCETNFRLAVKVYQHTAAYDGAISNWLGARTGDGVAAFPDTLTLQYKLAQGMRYGENPHQSGAFYVEKGSKEASISTARQIQGKELSYNNIGDTDAALECVKQFTEPACVIVKHANPCGVALGANIMEAYDKAYKTDPESSFGGIIAFNRELDESTARAIVERQFVEVIIAPKVTEAASEVVAAKKNVRLMECGFWPENPAPRFDYKRVNGGMLVQDADLELFTELKVVTKRAPTDKEMEDLLFTWRVAKFVKSNAIVYGRDNSTVGVGAGQMSRVNSARIAAIKAEHAGIPVQGAVMASDAFFPFRDGLDNAAAVGVTAVIQPGGSMRDAEVIAAADEHGIAMVFTAMRHFRH.

The region spanning 1 to 147 (MAKIGRALIS…KNNRDVTVVV (147 aa)) is the MGS-like domain.

The protein belongs to the PurH family.

It catalyses the reaction (6R)-10-formyltetrahydrofolate + 5-amino-1-(5-phospho-beta-D-ribosyl)imidazole-4-carboxamide = 5-formamido-1-(5-phospho-D-ribosyl)imidazole-4-carboxamide + (6S)-5,6,7,8-tetrahydrofolate. The enzyme catalyses IMP + H2O = 5-formamido-1-(5-phospho-D-ribosyl)imidazole-4-carboxamide. Its pathway is purine metabolism; IMP biosynthesis via de novo pathway; 5-formamido-1-(5-phospho-D-ribosyl)imidazole-4-carboxamide from 5-amino-1-(5-phospho-D-ribosyl)imidazole-4-carboxamide (10-formyl THF route): step 1/1. It functions in the pathway purine metabolism; IMP biosynthesis via de novo pathway; IMP from 5-formamido-1-(5-phospho-D-ribosyl)imidazole-4-carboxamide: step 1/1. This chain is Bifunctional purine biosynthesis protein PurH, found in Geobacter sp. (strain M21).